We begin with the raw amino-acid sequence, 272 residues long: Shikimate dehydrogenase (NADP(+)) (272 aa).

Residues 14–16 (SKS) and T61 each bind shikimate. The active-site Proton acceptor is the K65. NADP(+) is bound at residue E77. Shikimate contacts are provided by N86 and D102. NADP(+) contacts are provided by residues 126-130 (GAGGA), 150-155 (NRTFSK), and M213. Y215 is a binding site for shikimate. G237 contacts NADP(+).

Belongs to the shikimate dehydrogenase family. Homodimer.

It carries out the reaction shikimate + NADP(+) = 3-dehydroshikimate + NADPH + H(+). Its pathway is metabolic intermediate biosynthesis; chorismate biosynthesis; chorismate from D-erythrose 4-phosphate and phosphoenolpyruvate: step 4/7. In terms of biological role, involved in the biosynthesis of the chorismate, which leads to the biosynthesis of aromatic amino acids. Catalyzes the reversible NADPH linked reduction of 3-dehydroshikimate (DHSA) to yield shikimate (SA). This is Shikimate dehydrogenase (NADP(+)) from Psychromonas ingrahamii (strain DSM 17664 / CCUG 51855 / 37).